Consider the following 204-residue polypeptide: Large ribosomal subunit protein eL15 (204 aa).

The N-myristoyl glycine moiety is linked to residue G2. At S34 the chain carries Phosphoserine. K83 participates in a covalent cross-link: Glycyl lysine isopeptide (Lys-Gly) (interchain with G-Cter in SUMO2). Phosphoserine occurs at positions 97 and 100. Positions 165–186 (TSAGRKSRGLGKGHKFHHTIGG) are disordered. Positions 169 to 182 (RKSRGLGKGHKFHH) are enriched in basic residues.

The protein belongs to the eukaryotic ribosomal protein eL15 family. Component of the large ribosomal subunit. Interacts with IFIT1 (via TPR repeats 1-4).

Its subcellular location is the cytoplasm. In terms of biological role, component of the large ribosomal subunit. The ribosome is a large ribonucleoprotein complex responsible for the synthesis of proteins in the cell. The chain is Large ribosomal subunit protein eL15 (RPL15) from Bos taurus (Bovine).